A 1108-amino-acid polypeptide reads, in one-letter code: Receptor-type guanylate cyclase gcy-20 (1108 aa).

An N-terminal signal peptide occupies residues 1–15 (MRILLLLLQNILVFC). Over 16–474 (QFLQTIKVGL…ECPADFVKEY (459 aa)) the chain is Extracellular. N-linked (GlcNAc...) asparagine glycans are attached at residues asparagine 66, asparagine 131, asparagine 319, asparagine 341, asparagine 366, and asparagine 380. Residues 475–495 (LVYTIIAAFIVILALLAGCAG) form a helical membrane-spanning segment. A Protein kinase domain is found at 483 to 803 (FIVILALLAG…IEQVRSHLNG (321 aa)). Residues 489–497 (LLAGCAGLL) and lysine 571 each bind ATP. At 496–1108 (LLYTMHMKRK…QAGDNNSETV (613 aa)) the chain is on the cytoplasmic side. The region spanning 876-1006 (TIFFSDVVQF…DAVNTASRME (131 aa)) is the Guanylate cyclase domain. Positions 1083–1108 (LEKNAEGSETSSLSVDQAGDNNSETV) are disordered. A compositionally biased stretch (polar residues) spans 1089-1108 (GSETSSLSVDQAGDNNSETV).

The protein belongs to the adenylyl cyclase class-4/guanylyl cyclase family. In terms of tissue distribution, expressed asymmetrically in ASE left (ASEL) sensory neuron. Expressed in excretory gland and canal cell.

Its subcellular location is the cell membrane. It carries out the reaction GTP = 3',5'-cyclic GMP + diphosphate. Guanylate cyclase involved in the production of the second messenger cGMP. The protein is Receptor-type guanylate cyclase gcy-20 of Caenorhabditis elegans.